A 1092-amino-acid polypeptide reads, in one-letter code: Isoleucine--tRNA ligase (1092 aa).

Residues 53–63 (PFANGLPHYGH) carry the 'HIGH' region motif. The 'KMSKS' region motif lies at 613 to 617 (KLSKR). Residue K616 coordinates ATP.

This sequence belongs to the class-I aminoacyl-tRNA synthetase family. IleS type 2 subfamily. Monomer. It depends on Zn(2+) as a cofactor.

It is found in the cytoplasm. It carries out the reaction tRNA(Ile) + L-isoleucine + ATP = L-isoleucyl-tRNA(Ile) + AMP + diphosphate. Its function is as follows. Catalyzes the attachment of isoleucine to tRNA(Ile). As IleRS can inadvertently accommodate and process structurally similar amino acids such as valine, to avoid such errors it has two additional distinct tRNA(Ile)-dependent editing activities. One activity is designated as 'pretransfer' editing and involves the hydrolysis of activated Val-AMP. The other activity is designated 'posttransfer' editing and involves deacylation of mischarged Val-tRNA(Ile). In Rickettsia conorii (strain ATCC VR-613 / Malish 7), this protein is Isoleucine--tRNA ligase.